Reading from the N-terminus, the 206-residue chain is Large ribosomal subunit protein uL4 (206 aa).

The protein belongs to the universal ribosomal protein uL4 family. In terms of assembly, part of the 50S ribosomal subunit.

Its function is as follows. One of the primary rRNA binding proteins, this protein initially binds near the 5'-end of the 23S rRNA. It is important during the early stages of 50S assembly. It makes multiple contacts with different domains of the 23S rRNA in the assembled 50S subunit and ribosome. Forms part of the polypeptide exit tunnel. This is Large ribosomal subunit protein uL4 from Xanthobacter autotrophicus (strain ATCC BAA-1158 / Py2).